Consider the following 197-residue polypeptide: dTTP/UTP pyrophosphatase (197 aa).

Asp-70 functions as the Proton acceptor in the catalytic mechanism.

The protein belongs to the Maf family. YhdE subfamily. A divalent metal cation serves as cofactor.

The protein localises to the cytoplasm. It catalyses the reaction dTTP + H2O = dTMP + diphosphate + H(+). The enzyme catalyses UTP + H2O = UMP + diphosphate + H(+). Its function is as follows. Nucleoside triphosphate pyrophosphatase that hydrolyzes dTTP and UTP. May have a dual role in cell division arrest and in preventing the incorporation of modified nucleotides into cellular nucleic acids. The protein is dTTP/UTP pyrophosphatase of Methanosarcina mazei (strain ATCC BAA-159 / DSM 3647 / Goe1 / Go1 / JCM 11833 / OCM 88) (Methanosarcina frisia).